Reading from the N-terminus, the 302-residue chain is GATA transcription factor 28 (302 aa).

The segment at 47 to 66 (NAGGMSEGVETDIPSHPGNV) is disordered. The Tify domain maps to 77–112 (GSEQGDQLTLSFQGQVYVFDSVLPEKVQAVLLLLGG). A disordered region spans residues 119 to 141 (APPGLGSPHQNNRVSSLPGTPQR). The segment covering 126–141 (PHQNNRVSSLPGTPQR) has biased composition (polar residues). The region spanning 147–189 (RLASLVRFREKRKGRNFDKKIRYTVRKEVALRMQRNKGQFTSA) is the CCT domain. A GATA-type zinc finger spans residues 217–273 (QHQEISCRHCGIGEKSTPMMRRGPAGPRTLCNACGLMWANKGAFRDLSKASPQTAQN).

The protein belongs to the type IV zinc-finger family. Class C subfamily. As to expression, predominantly expressed in shoot apices, inflorescences and roots.

It localises to the nucleus. Transcriptional activator that specifically binds 5'-GATA-3' or 5'-GAT-3' motifs within gene promoters. This Arabidopsis thaliana (Mouse-ear cress) protein is GATA transcription factor 28 (GATA28).